We begin with the raw amino-acid sequence, 390 residues long: uncharacterized protein (390 aa).

It belongs to the peptidase M24 family.

This is an uncharacterized protein from Sinorhizobium fredii (strain NBRC 101917 / NGR234).